The sequence spans 120 residues: Large ribosomal subunit protein eL8 (120 aa).

It belongs to the eukaryotic ribosomal protein eL8 family. As to quaternary structure, part of the 50S ribosomal subunit. Probably part of the RNase P complex.

The protein resides in the cytoplasm. Multifunctional RNA-binding protein that recognizes the K-turn motif in ribosomal RNA, the RNA component of RNase P, box H/ACA, box C/D and box C'/D' sRNAs. This chain is Large ribosomal subunit protein eL8, found in Haloquadratum walsbyi (strain DSM 16790 / HBSQ001).